The primary structure comprises 427 residues: 3-phosphoshikimate 1-carboxyvinyltransferase (427 aa).

Positions 22, 23, and 27 each coordinate 3-phosphoshikimate. Lys-22 contributes to the phosphoenolpyruvate binding site. The phosphoenolpyruvate site is built by Gly-96 and Arg-124. The 3-phosphoshikimate site is built by Ser-169, Ser-170, Gln-171, Ser-197, Asp-313, Asn-336, and Lys-340. Gln-171 is a phosphoenolpyruvate binding site. Residue Asp-313 is the Proton acceptor of the active site. Residues Arg-344, Arg-386, and Lys-411 each coordinate phosphoenolpyruvate.

It belongs to the EPSP synthase family. As to quaternary structure, monomer.

It localises to the cytoplasm. It carries out the reaction 3-phosphoshikimate + phosphoenolpyruvate = 5-O-(1-carboxyvinyl)-3-phosphoshikimate + phosphate. Its pathway is metabolic intermediate biosynthesis; chorismate biosynthesis; chorismate from D-erythrose 4-phosphate and phosphoenolpyruvate: step 6/7. Functionally, catalyzes the transfer of the enolpyruvyl moiety of phosphoenolpyruvate (PEP) to the 5-hydroxyl of shikimate-3-phosphate (S3P) to produce enolpyruvyl shikimate-3-phosphate and inorganic phosphate. The polypeptide is 3-phosphoshikimate 1-carboxyvinyltransferase (Salmonella schwarzengrund (strain CVM19633)).